Consider the following 180-residue polypeptide: Threonylcarbamoyl-AMP synthase (180 aa).

The 180-residue stretch at 1 to 180 (MRARALQHFL…DLITGAIVRP (180 aa)) folds into the YrdC-like domain.

Belongs to the SUA5 family. TsaC subfamily.

The protein resides in the cytoplasm. It catalyses the reaction L-threonine + hydrogencarbonate + ATP = L-threonylcarbamoyladenylate + diphosphate + H2O. Required for the formation of a threonylcarbamoyl group on adenosine at position 37 (t(6)A37) in tRNAs that read codons beginning with adenine. Catalyzes the conversion of L-threonine, HCO(3)(-)/CO(2) and ATP to give threonylcarbamoyl-AMP (TC-AMP) as the acyladenylate intermediate, with the release of diphosphate. The sequence is that of Threonylcarbamoyl-AMP synthase from Methylobacillus flagellatus (strain ATCC 51484 / DSM 6875 / VKM B-1610 / KT).